The primary structure comprises 676 residues: Envelope glycoprotein (676 aa).

Positions 1–32 are cleaved as a signal peptide; the sequence is MGVTGILQLPRDRFKRTSFFLWVIILFQRTFS. The Extracellular segment spans residues 33–650; that stretch reads IPLGVIHNST…NDNWWTGWRQ (618 aa). Residue N40 is glycosylated (N-linked (GlcNAc...) asparagine; by host). 5 disulfide bridges follow: C53–C609, C108–C135, C121–C147, C511–C556, and C601–C608. Residues 54-201 form a receptor-binding region; that stretch reads RDKLSSTNQL…DFFSSHPLRE (148 aa). N204, N228, N238, N257, N268, N296, N317, N333, N346, N386, and N413 each carry an N-linked (GlcNAc...) asparagine; by host glycan. The mucin-like region stretch occupies residues 305–485; it reads ELSFTVVSNG…SGKLGLITNT (181 aa). Positions 315–335 are enriched in polar residues; that stretch reads AKNISGQSPARTSSDPGTNTT. The interval 315 to 337 is disordered; the sequence is AKNISGQSPARTSSDPGTNTTTE. Over residues 373–391 the composition is skewed to polar residues; sequence TSPQSLTTKPGPDNSTHNT. 2 disordered regions span residues 373–392 and 402–479; these read TSPQSLTTKPGPDNSTHNTP and TQVE…SGKL. The span at 414-432 shows a compositional bias: low complexity; the sequence is DSTASDTPSATTAAGPPKA. Residues 433–464 are compositionally biased toward polar residues; sequence ENTNTSKSTDFLDPATTTSPQNHSETAGNNNT. N436, N454, and N462 each carry an N-linked (GlcNAc...) asparagine; by host glycan. Residues 524–539 are fusion peptide; it reads GAAIGLAWIPYFGPAA. Positions 554 to 595 form a coiled coil; that stretch reads LICGLRQLANETTQALQLFLRATTELRTFSILNRKAIDFLLQ. N563 carries N-linked (GlcNAc...) asparagine; by host glycosylation. Residues 615–634 are a coiled coil; the sequence is WTKNITDKIDQIIHDFVDKT. An N-linked (GlcNAc...) asparagine; by host glycan is attached at N618. A helical transmembrane segment spans residues 651-671; it reads WIPAGIGVTGVIIAVIALFCI. S-palmitoyl cysteine; by host attachment occurs at residues C670 and C672. The Cytoplasmic segment spans residues 672 to 676; the sequence is CKFVF.

Belongs to the filoviruses glycoprotein family. Homotrimer; each monomer consists of a GP1 and a GP2 subunit linked by disulfide bonds. The resulting peplomers (GP1,2) protrude from the virus surface as spikes. Interacts with host integrin alpha-V/ITGAV. Interacts with host CLEC10A. Binds also to host CD209 and CLEC4M/DC-SIGN(R). Interacts with host FOLR1. Interacts with BST2; this interaction inhibits the antiviral effect of BST2 and this allows viral release from infected cells. Interacts with host FCN1; this interaction enhances viral entry. Interacts with host TLR4; this interaction induces cell death in T-lymphocytes or proinflammatory cytokines and SOCS1 production in monocytes. As to quaternary structure, interacts with host entry receptor NPC1. In terms of assembly, GP1 and GP2delta are part of GP1,2delta soluble complexes released by ectodomain shedding. Post-translationally, the signal peptide region modulates GP's high mannose glycosylation, thereby determining the efficiency of the interactions with DC-SIGN(R). In terms of processing, N-glycosylated. O-glycosylated in the mucin-like region. Post-translationally, palmitoylation of GP2 is not required for its function. In terms of processing, specific enzymatic cleavages in vivo yield mature proteins. The precursor is processed into GP1 and GP2 by host cell furin in the trans Golgi, and maybe by other host proteases, to yield the mature GP1 and GP2 proteins. The cleavage site corresponds to the furin optimal cleavage sequence [KR]-X-[KR]-R. This cleavage does not seem to be required for function. After the internalization of the virus into cell endosomes, GP1 C-terminus is removed by the endosomal proteases cathepsin B, cathepsin L, or both, leaving a 19-kDa N-terminal fragment which is further digested by cathepsin B. Proteolytic processing of GP1,2 by host ADAM17 can remove the transmembrane anchor of GP2 and leads to shedding of complexes consisting in GP1 and truncated GP2 (GP1,2delta).

The protein localises to the virion membrane. It localises to the host cell membrane. It is found in the secreted. Functionally, trimeric GP1,2 complexes form the virion surface spikes and mediate the viral entry processes, with GP1 acting as the receptor-binding subunit and GP2 as the membrane fusion subunit. At later times of infection, down-regulates the expression of various host cell surface molecules that are essential for immune surveillance and cell adhesion. Down-modulates several integrins including ITGA1, ITGA2, ITGA3, ITGA4, ITGA5, ITGA6, ITGAV and ITGB1. This decrease in cell adhesion molecules may lead to cell detachment, contributing to the disruption of blood vessel integrity and hemorrhages developed during infection (cytotoxicity). Interacts with host TLR4 and thereby stimulates the differentiation and activation of monocytes leading to bystander death of T-lymphocytes. Down-regulates as well the function of host natural killer cells. Counteracts the antiviral effect of host BST2/tetherin that restricts release of progeny virions from infected cells. However, cooperates with VP40 and host BST2 to activate canonical NF-kappa-B pathway in a manner dependent on neddylation. Its function is as follows. Functions as a decoy for anti-GP1,2 antibodies thereby contributing to viral immune evasion. Interacts and activates host macrophages and dendritic cells inducing up-regulation of cytokine transcription. This effect is mediated throught activation of host TLR4. In terms of biological role, responsible for binding to the receptor(s) on target cells. Interacts with CD209/DC-SIGN and CLEC4M/DC-SIGNR which act as cofactors for virus entry into dendritic cells (DCs) and endothelial cells. Binding to the macrophage specific lectin CLEC10A also seems to enhance virus infectivity. Interaction with FOLR1/folate receptor alpha may be a cofactor for virus entry in some cell types, although results are contradictory. Members of the Tyro3 receptor tyrosine kinase family also seem to be cell entry factors in filovirus infection. Once attached, the virions are internalized through clathrin-dependent endocytosis and/or macropinocytosis. After internalization of the virus into the endosomes of the host cell, proteolysis of GP1 by two cysteine proteases, CTSB/cathepsin B and CTSL/cathepsin L removes the glycan cap and allows GP1 binding to the host entry receptor NPC1. NPC1-binding, Ca(2+) and acidic pH induce a conformational change of GP2, which unmasks its fusion peptide and permit membranes fusion. Acts as a class I viral fusion protein. Under the current model, the protein has at least 3 conformational states: pre-fusion native state, pre-hairpin intermediate state, and post-fusion hairpin state. During viral and target cell membrane fusion, the coiled coil regions (heptad repeats) assume a trimer-of-hairpins structure, positioning the fusion peptide in close proximity to the C-terminal region of the ectodomain. The formation of this structure appears to drive apposition and subsequent fusion of viral and target cell membranes. Responsible for penetration of the virus into the cell cytoplasm by mediating the fusion of the membrane of the endocytosed virus particle with the endosomal membrane. Low pH in endosomes induces an irreversible conformational change in GP2, releasing the fusion hydrophobic peptide. This Epomops franqueti (Franquet's epauletted fruit bat) protein is Envelope glycoprotein (GP).